The primary structure comprises 141 residues: ATP synthase F(0) complex subunit C2, mitochondrial (141 aa).

Residues 1–66 constitute a mitochondrion transit peptide; sequence MFACSKFVST…RSFQTSAISR (66 aa). Residues 82–102 traverse the membrane as a helical segment; sequence VGVAGSGAGIGTVFGSLIIGY. Lysine 109 is subject to N6,N6,N6-trimethyllysine. A helical transmembrane segment spans residues 117-137; sequence ILGFALSEAMGLFCLMVAFLI.

The protein belongs to the ATPase C chain family. F-type ATPases have 2 components, CF(1) - the catalytic core - and CF(0) - the membrane proton channel. CF(1) has five subunits: alpha(3), beta(3), gamma(1), delta(1), epsilon(1). CF(0) has three main subunits: a, b and c. Interacts with DNAJC30; interaction is direct. Trimethylated by ATPSCKMT at Lys-109. Methylation is required for proper incorporation of the C subunit into the ATP synthase complex and mitochondrial respiration.

The protein localises to the mitochondrion membrane. Mitochondrial membrane ATP synthase (F(1)F(0) ATP synthase or Complex V) produces ATP from ADP in the presence of a proton gradient across the membrane which is generated by electron transport complexes of the respiratory chain. F-type ATPases consist of two structural domains, F(1) - containing the extramembraneous catalytic core and F(0) - containing the membrane proton channel, linked together by a central stalk and a peripheral stalk. During catalysis, ATP synthesis in the catalytic domain of F(1) is coupled via a rotary mechanism of the central stalk subunits to proton translocation. Part of the complex F(0) domain. A homomeric c-ring of probably 10 subunits is part of the complex rotary element. This is ATP synthase F(0) complex subunit C2, mitochondrial from Homo sapiens (Human).